The primary structure comprises 492 residues: MO25-like protein 3 (492 aa).

The disordered stretch occupies residues 442–492; that stretch reads SRAGIRFGETRNVKGSPRSRSQSPRPPTGPEPSPRTTSYQNVRFPPEDSSR. The span at 465-474 shows a compositional bias: pro residues; that stretch reads PRPPTGPEPS.

This sequence belongs to the Mo25 family.

The protein is MO25-like protein 3 of Caenorhabditis briggsae.